Consider the following 588-residue polypeptide: Transcriptional regulatory protein ASH1 (588 aa).

Phosphoserine is present on S56. Disordered stretches follow at residues 85 to 109, 377 to 398, and 417 to 495; these read SNTAPASPHHMDYNPISSLTPGNSP, SNNSKSNVRKPSKNKISKQASN, and SSVS…TRHT. A compositionally biased stretch (polar residues) spans 99–109; the sequence is PISSLTPGNSP. Over residues 383-392 the composition is skewed to basic residues; it reads NVRKPSKNKI. Positions 417–433 are enriched in low complexity; the sequence is SSVSASSSPSPSTPTKS. At S465 the chain carries Phosphoserine. The segment covering 470–493 has biased composition (low complexity); it reads PRRSSNSSITKKGSRRSSGSSPTR. The segment at 499–526 adopts a GATA-type; atypical zinc-finger fold; it reads CVSCHSSDSPCWRPSWSPRKQDQLCNSC.

Component of the RPD3C(L) complex composed of at least ASH1, CTI6, DEP1, PHO23, RPD3, RXT2, RXT3, SAP30, SDS3, SIN3, UME1 and UME6.

The protein localises to the nucleus. In terms of biological role, component of the RPD3C(L) histone deacetylase complex (HDAC). Responsible for the deacetylation of lysine residues on the N-terminal part of the core histones (H2A, H2B, H3 and H4). Histone deacetylation gives a tag for epigenetic repression and plays an important role in transcriptional regulation, cell cycle progression and developmental events. ASH1 is necessary to repress HO in daughter cells to block mating-type switching through its binding to HO promoter 5'-YTGAT-3' sites. Also involved in pseudohyphal growth. In Saccharomyces cerevisiae (strain ATCC 204508 / S288c) (Baker's yeast), this protein is Transcriptional regulatory protein ASH1 (ASH1).